The primary structure comprises 188 residues: PRA1 family protein 3 (188 aa).

Met1 carries the post-translational modification N-acetylmethionine. Topologically, residues 1 to 35 (MEVQVAPLRSWEDFFPGSDRFGRPDFKDISKWNNR) are cytoplasmic. The next 2 membrane-spanning stretches (helical) occupy residues 36–56 (VVNN…AVVA) and 57–77 (IVGF…ILVF). The Cytoplasmic portion of the chain corresponds to 78–93 (LGFVWVSHNKDILRRM). A run of 2 helical transmembrane segments spans residues 94–114 (KKQY…FLIS) and 115–135 (YLGD…LMFI). Over 136–188 (HASLRLRNIKNKLENKKEEIGLKKTPMGIILDALEQQEDNINKLASYIPKVKE) the chain is Cytoplasmic. The segment at 136 to 188 (HASLRLRNIKNKLENKKEEIGLKKTPMGIILDALEQQEDNINKLASYIPKVKE) is targeting to endoplasmic reticulum membrane.

The protein belongs to the PRA1 family. As to quaternary structure, binds to prenylated RAB and Ras superfamily members.

Its subcellular location is the endoplasmic reticulum membrane. The protein localises to the cell membrane. It localises to the cytoplasm. It is found in the cytoskeleton. Regulates intracellular concentrations of taurine and glutamate. Negatively modulates SLC1A1/EAAC1 glutamate transport activity by decreasing its affinity for glutamate in a PKC activity-dependent manner. May be involved in membrane traffic. This is PRA1 family protein 3 (ARL6IP5) from Gallus gallus (Chicken).